The sequence spans 149 residues: Nucleoside diphosphate kinase (149 aa).

The ATP site is built by Lys9, Phe57, Arg85, Thr91, Arg102, and Asn112. His115 (pros-phosphohistidine intermediate) is an active-site residue.

This sequence belongs to the NDK family. It depends on Mg(2+) as a cofactor.

It is found in the cytoplasm. The enzyme catalyses a 2'-deoxyribonucleoside 5'-diphosphate + ATP = a 2'-deoxyribonucleoside 5'-triphosphate + ADP. It catalyses the reaction a ribonucleoside 5'-diphosphate + ATP = a ribonucleoside 5'-triphosphate + ADP. Functionally, major role in the synthesis of nucleoside triphosphates other than ATP. The ATP gamma phosphate is transferred to the NDP beta phosphate via a ping-pong mechanism, using a phosphorylated active-site intermediate. In Methanosarcina acetivorans (strain ATCC 35395 / DSM 2834 / JCM 12185 / C2A), this protein is Nucleoside diphosphate kinase.